The primary structure comprises 308 residues: Ribosomal protein L11 methyltransferase (308 aa).

4 residues coordinate S-adenosyl-L-methionine: Thr-148, Gly-169, Asp-191, and Asn-239.

Belongs to the methyltransferase superfamily. PrmA family.

It is found in the cytoplasm. The catalysed reaction is L-lysyl-[protein] + 3 S-adenosyl-L-methionine = N(6),N(6),N(6)-trimethyl-L-lysyl-[protein] + 3 S-adenosyl-L-homocysteine + 3 H(+). Its function is as follows. Methylates ribosomal protein L11. This chain is Ribosomal protein L11 methyltransferase, found in Psychrobacter cryohalolentis (strain ATCC BAA-1226 / DSM 17306 / VKM B-2378 / K5).